Reading from the N-terminus, the 319-residue chain is Glycine--tRNA ligase alpha subunit (319 aa).

A disordered region spans residues 290-319; it reads RQQQPEAPAPGPAAVVGGRDRKDACDVKEG. Residues 307–319 show a composition bias toward basic and acidic residues; the sequence is GRDRKDACDVKEG.

The protein belongs to the class-II aminoacyl-tRNA synthetase family. In terms of assembly, tetramer of two alpha and two beta subunits.

It localises to the cytoplasm. It catalyses the reaction tRNA(Gly) + glycine + ATP = glycyl-tRNA(Gly) + AMP + diphosphate. This chain is Glycine--tRNA ligase alpha subunit, found in Moorella thermoacetica (strain ATCC 39073 / JCM 9320).